The chain runs to 198 residues: Dephospho-CoA kinase (198 aa).

The DPCK domain occupies 2–90 (LIAIVGKPGV…KLSLVTKPLL (89 aa)). 10–15 (GVGKTS) contributes to the ATP binding site.

Belongs to the CoaE family.

The protein localises to the cytoplasm. It catalyses the reaction 3'-dephospho-CoA + ATP = ADP + CoA + H(+). Its pathway is cofactor biosynthesis; coenzyme A biosynthesis; CoA from (R)-pantothenate: step 5/5. Functionally, catalyzes the phosphorylation of the 3'-hydroxyl group of dephosphocoenzyme A to form coenzyme A. The protein is Dephospho-CoA kinase of Mycoplasma genitalium (strain ATCC 33530 / DSM 19775 / NCTC 10195 / G37) (Mycoplasmoides genitalium).